We begin with the raw amino-acid sequence, 274 residues long: NH(3)-dependent NAD(+) synthetase (274 aa).

46-53 (GISGGQDS) contributes to the ATP binding site. Residue aspartate 52 coordinates Mg(2+). Arginine 140 is a binding site for deamido-NAD(+). Threonine 160 is an ATP binding site. Residue glutamate 165 coordinates Mg(2+). The deamido-NAD(+) site is built by lysine 173 and aspartate 180. The ATP site is built by lysine 189 and threonine 211. 260 to 261 (HK) provides a ligand contact to deamido-NAD(+).

Belongs to the NAD synthetase family. As to quaternary structure, homodimer.

It carries out the reaction deamido-NAD(+) + NH4(+) + ATP = AMP + diphosphate + NAD(+) + H(+). It participates in cofactor biosynthesis; NAD(+) biosynthesis; NAD(+) from deamido-NAD(+) (ammonia route): step 1/1. Functionally, catalyzes the ATP-dependent amidation of deamido-NAD to form NAD. Uses ammonia as a nitrogen source. The protein is NH(3)-dependent NAD(+) synthetase of Streptococcus pneumoniae serotype 19F (strain G54).